A 477-amino-acid chain; its full sequence is Adenylyl cyclase-associated protein 2 (477 aa).

An N-acetylalanine modification is found at A2. Disordered stretches follow at residues 224-261 and 274-323; these read VLSS…PSRS and TKGL…KHAP. The span at 230-246 shows a compositional bias: pro residues; it reads GLPPPPPPPPPPGPPPL. S301 and S309 each carry phosphoserine. A compositionally biased stretch (low complexity) spans 301–320; sequence SPTKSHTPSPTSPKSYPSQK. The 139-residue stretch at 317-455 folds into the C-CAP/cofactor C-like domain; that stretch reads PSQKHAPVLE…QDGDYREFPI (139 aa).

The protein belongs to the CAP family.

Its subcellular location is the cell membrane. In terms of biological role, involved in the regulation of actin polymerization. The polypeptide is Adenylyl cyclase-associated protein 2 (CAP2) (Pongo abelii (Sumatran orangutan)).